A 269-amino-acid chain; its full sequence is Proline-rich protein 7 (269 aa).

Residues 1–9 (MVMSQGTYT) are Extracellular-facing. Positions 1 to 44 (MVMSQGTYTFLTCFAGFWLIWGLIVLLCCFCSFLRRRLKRRQEE) are required for interaction with NMDA receptors. The segment at 2-39 (VMSQGTYTFLTCFAGFWLIWGLIVLLCCFCSFLRRRLK) is required for membrane localization. A helical; Signal-anchor for type III membrane protein membrane pass occupies residues 10–30 (FLTCFAGFWLIWGLIVLLCCF). The Cytoplasmic segment spans residues 31-269 (CSFLRRRLKR…IPLFGRTTAV (239 aa)). S64 carries the post-translational modification Phosphoserine. 2 disordered regions span residues 64 to 83 (SLAG…RSRL) and 98 to 128 (LLHH…LSVP). The segment covering 108–117 (AHPHPHHHAL) has biased composition (basic residues). The segment covering 118–128 (PHPPPSHLSVP) has biased composition (pro residues). The interval 146 to 166 (PCYEEAVLMAEPPPPYSEVLT) is required for internalization. Positions 146–269 (PCYEEAVLMA…IPLFGRTTAV (124 aa)) are required for apoptosis induction. The PDZ-binding signature appears at 267–269 (TAV).

In terms of assembly, forms a complex with NMDA receptor zeta subunit GRIN1 and epsilon subunit GRIN2B. Interacts with GRIN2B. Interacts with GRIN1; the interaction is reduced upon NMDA receptor activity. Found in a postsynaptic membrane complex with DLG4 and GRIN1. Interacts with DLG4 (via PDZ3 domain and to lesser degree via PDZ2 domain). Interacts with FBXW7. Found in a complex with JUN and FBXW7. Interacts with JUN and FBXW7; the interaction inhibits ubiquitination-mediated JUN degradation promoting its phosphorylation and transcriptional activity. Interacts with SRC. In terms of processing, palmitoylated. Post-translationally, tyrosine phosphorylated, possibly by SRC. In terms of tissue distribution, expressed in brain. Expressed in the cerebral cortex and especially in hippocampal neural cells (at protein level).

It is found in the cell membrane. The protein resides in the postsynaptic cell membrane. Its subcellular location is the postsynaptic density membrane. The protein localises to the cytoplasm. It localises to the perinuclear region. It is found in the synapse. The protein resides in the cell projection. Its subcellular location is the dendrite. The protein localises to the nucleus. Its function is as follows. Acts as a synapse-to-nucleus messenger to promote NMDA receptor-mediated excitotoxicity in neurons in a JUN-dependent manner. Inhibits ubiquitination-mediated degradation and promotes phosphorylation and transcriptional activity of transcription factor JUN. Might play a redundant role in the regulation of T cell receptor signaling. Might promote apoptosis in T cells. This chain is Proline-rich protein 7 (Prr7), found in Rattus norvegicus (Rat).